The primary structure comprises 486 residues: MSNNFKDDFEKNRQSIDTNSHQDHTEDVEKDQSELEHQDTIENTEQQFPPRNAQRRKRRRDLATNHNKQVHNESQTSEDNVQNEAGTIDDRQVESSHSTESQEPSHQDSTPQHEEEYYNKNAFAMDKSHPEPIEDNDKHETIKDAENNTEHSTVSDKSIAEQSQQPKPYFATGANQANTSKDKHDDVTVKQDKDESKDHHSGKKGAAIGAGTAGVAGAAGAMGVSKAKKHSNDAQNKSNSDKSNNSTEDKASQDKSKDHHNGKKGAAIGAGTAGLAGGAASKSASAASKPHASNNASQNHDEHDNHDRDKERKKGGMAKVLLPLIAAVLIIGALAIFGGMALNNHNNGTKENKIANTNKNNADESKDKDTSKDASKDKSKSTDSDKSKEDQDKATKDESDNDQNNANQANNQAQNNQNQQQANQNQQQQQQRQGGGQRHTVNGQENLYRIAIQYYGSGSPENVEKIRRANGLSGNNIRNGQQIVIP.

Over residues Met1–Thr40 the composition is skewed to basic and acidic residues. Residues Met1 to Lys314 form a disordered region. Residues Ser2–Lys204 are Extracellular-facing. The tract at residues Gln14 to Glu34 is elastin-binding. Over residues Thr64–Ala85 the composition is skewed to polar residues. Composition is skewed to basic and acidic residues over residues Glu103–Tyr118 and Asp126–Thr149. A compositionally biased stretch (polar residues) spans Glu150–Pro166. Positions Ser180–His199 are enriched in basic and acidic residues. Low complexity-rich tracts occupy residues Lys204 to Ser225 and Asp233 to Ser246. Residues Gly205–Ser225 traverse the membrane as a helical segment. The Cytoplasmic segment spans residues Lys226–Lys319. A compositionally biased stretch (basic and acidic residues) spans Thr247–His259. Residues Gly278–Ser297 show a composition bias toward low complexity. A compositionally biased stretch (basic and acidic residues) spans Asn299–Lys314. The helical transmembrane segment at Val320–Met340 threads the bilayer. Over Ala341–Pro486 the chain is Extracellular. The disordered stretch occupies residues Glu351–Thr440. The segment covering Asn361 to Glu398 has biased composition (basic and acidic residues). Positions Gln403 to Gln431 are enriched in low complexity. The region spanning Gln437–Ile485 is the LysM domain.

The protein localises to the cell membrane. In terms of biological role, promotes binding of soluble elastin peptides and tropoelastin to S.aureus cells although it is not able to promote bacterial adherence to immobilized elastin and, therefore, is not a microbial surface component recognizing adhesive matrix molecule (MSCRAMM). The sequence is that of Elastin-binding protein EbpS (ebpS) from Staphylococcus aureus (strain Mu50 / ATCC 700699).